The chain runs to 131 residues: Small ribosomal subunit protein uS8 (131 aa).

It belongs to the universal ribosomal protein uS8 family. As to quaternary structure, part of the 30S ribosomal subunit. Contacts proteins S5 and S12.

In terms of biological role, one of the primary rRNA binding proteins, it binds directly to 16S rRNA central domain where it helps coordinate assembly of the platform of the 30S subunit. The sequence is that of Small ribosomal subunit protein uS8 from Mesomycoplasma hyopneumoniae (strain 7448) (Mycoplasma hyopneumoniae).